Reading from the N-terminus, the 156-residue chain is Ribosomal RNA large subunit methyltransferase H (156 aa).

S-adenosyl-L-methionine contacts are provided by residues Leu73, Gly104, and 123 to 128 (LSALTL).

The protein belongs to the RNA methyltransferase RlmH family. In terms of assembly, homodimer.

It is found in the cytoplasm. The catalysed reaction is pseudouridine(1915) in 23S rRNA + S-adenosyl-L-methionine = N(3)-methylpseudouridine(1915) in 23S rRNA + S-adenosyl-L-homocysteine + H(+). Functionally, specifically methylates the pseudouridine at position 1915 (m3Psi1915) in 23S rRNA. This chain is Ribosomal RNA large subunit methyltransferase H, found in Shewanella sp. (strain ANA-3).